A 729-amino-acid polypeptide reads, in one-letter code: E3 ubiquitin-protein ligase SH3RF2 (729 aa).

The segment at 12–53 (CPVCFEKLDVTAKVLPCQHTFCKPCLQRVFKAHKELRCPECR) adopts an RING-type zinc-finger fold. Residues 78–105 (SGQSSGRGGSFRRPGTMTLQDGRKSRTN) are disordered. 2 SH3 domains span residues 125–184 (DGVP…VIKQ) and 187–252 (QPPP…PNLT). The interval 258–297 (EKNKGRQSSRTKNLSLVSSSSRGNTSTLRRGPGSRRKVPG) is disordered. Positions 263–285 (RQSSRTKNLSLVSSSSRGNTSTL) are enriched in polar residues. The tract at residues 370-459 (VVSLPGSQQH…RSPGLYTTWT (90 aa)) is interaction with PAK4. An SH3 3 domain is found at 380 to 441 (LSANMFVALH…PNNYVIPIFR (62 aa)). 2 disordered regions span residues 497-526 (STAG…QRPL) and 610-677 (KSEP…SQPE). The segment covering 517 to 526 (RKNGSLQRPL) has biased composition (polar residues). An interaction with PPP1CA region spans residues 641–646 (KTVRFQ). A Phosphoserine modification is found at Ser-649.

Belongs to the SH3RF family. In terms of assembly, interacts with FASLG and PPP1CA. Interacts with PAK4 and TNFRSF1A. Interacts with DLK1, MAP3K10/MLK2, MAPK8IP1/JIP1, MAPK8IP2/JIP2 and MAPK8IP3/JIP3. Interacts with RAC1 (both active GTP- or inactive GDP-bound forms). Autoubiquitinated. Heart (at protein level). Up-regulated in colon cancer tissues as compared to normal colon tissues (at protein level). Testis. In the heart, present in the apex, left atrium, right atrium, left ventricle and right ventricle, but not in the aorta.

The protein resides in the nucleus. The enzyme catalyses S-ubiquitinyl-[E2 ubiquitin-conjugating enzyme]-L-cysteine + [acceptor protein]-L-lysine = [E2 ubiquitin-conjugating enzyme]-L-cysteine + N(6)-ubiquitinyl-[acceptor protein]-L-lysine.. The protein operates within protein modification; protein ubiquitination. In terms of biological role, has E3 ubiquitin-protein ligase activity. Acts as an anti-apoptotic regulator of the JNK pathway by ubiquitinating and promoting the degradation of SH3RF1, a scaffold protein that is required for pro-apoptotic JNK activation. Facilitates TNF-alpha-mediated recruitment of adapter proteins TRADD and RIPK1 to TNFRSF1A and regulates PAK4 protein stability via inhibition of its ubiquitin-mediated proteasomal degradation. Inhibits PPP1CA phosphatase activity. In Homo sapiens (Human), this protein is E3 ubiquitin-protein ligase SH3RF2 (SH3RF2).